The chain runs to 350 residues: Patr class I histocompatibility antigen, alpha chain E (350 aa).

Positions 1 to 21 (MVDGTLLLLLSEALALTQTWA) are cleaved as a signal peptide. The interval 22-111 (GSHSLKYFHT…LRGYYNQSEA (90 aa)) is alpha-1. The Extracellular segment spans residues 22–305 (GSHSLKYFHT…KPASQPTIPI (284 aa)). N-linked (GlcNAc...) asparagine glycosylation occurs at asparagine 107. Residues 112–203 (GSHTLQWMHG…EKGKETLLHL (92 aa)) form an alpha-2 region. 2 disulfides stabilise this stretch: cysteine 122-cysteine 185 and cysteine 224-cysteine 280. The tract at residues 204 to 295 (EPPKTHVTHH…GLPEPLTLRW (92 aa)) is alpha-3. One can recognise an Ig-like C1-type domain in the interval 206–294 (PKTHVTHHPI…EGLPEPLTLR (89 aa)). The connecting peptide stretch occupies residues 296-305 (KPASQPTIPI). A helical membrane pass occupies residues 306–329 (VGIIAGLVLLGSVVSGAVVAAVMW). Topologically, residues 330–350 (RKKSSGGKGRSYSKAEWSDSA) are cytoplasmic.

Belongs to the MHC class I family. Heterodimer of an alpha chain and a beta chain (beta-2-microglobulin).

It localises to the membrane. In terms of biological role, preferably binds to a peptide derived from the signal sequence of most HLA-A, -B, -C and -G molecules. In Pan troglodytes (Chimpanzee), this protein is Patr class I histocompatibility antigen, alpha chain E (Patr-E).